The primary structure comprises 241 residues: tRNA (guanine-N(7)-)-methyltransferase (241 aa).

Residues Glu-71, Glu-96, Asp-123, and Asp-146 each contribute to the S-adenosyl-L-methionine site. Residue Asp-146 is part of the active site. Substrate is bound by residues Lys-150, Asp-182, and 219-222 (TKFE).

The protein belongs to the class I-like SAM-binding methyltransferase superfamily. TrmB family.

The catalysed reaction is guanosine(46) in tRNA + S-adenosyl-L-methionine = N(7)-methylguanosine(46) in tRNA + S-adenosyl-L-homocysteine. The protein operates within tRNA modification; N(7)-methylguanine-tRNA biosynthesis. In terms of biological role, catalyzes the formation of N(7)-methylguanine at position 46 (m7G46) in tRNA. In Pseudoalteromonas translucida (strain TAC 125), this protein is tRNA (guanine-N(7)-)-methyltransferase.